The sequence spans 218 residues: Small ribosomal subunit protein uS3c (218 aa).

The 72-residue stretch at 47–118 (VQKNMRTSSG…KLNIAVTRIA (72 aa)) folds into the KH type-2 domain.

This sequence belongs to the universal ribosomal protein uS3 family. In terms of assembly, part of the 30S ribosomal subunit.

The protein localises to the plastid. The protein resides in the chloroplast. This is Small ribosomal subunit protein uS3c (rps3) from Atropa belladonna (Belladonna).